A 286-amino-acid polypeptide reads, in one-letter code: MTETAFLKLFVAIVITFILVLPEFFKTPKERTLELSCLEVCFLPNSTYPLSSFNFSSVAFLQPAEETQTIMGILPNHSSFQSFAEICQGITSGLPMCSLCLVCESKGDVDFTSQEQTSKGLVMRGSKEVKASDFYSPCEYFNVTVALLADPVKEDTTCTPEGHPGEAIALDEDPVREKSLNHTCRFMKNTDNCTHIFLHLEMDVKSVTCSMKITWYVLVLFVFMLGIIFIIYKILEEHRRVWRRQSHNYKSSSVLFRGHDSGKLSTLNVRVIPGYPWTIWTRDFDE.

The Cytoplasmic segment spans residues 1-4 (MTET). A helical transmembrane segment spans residues 5 to 25 (AFLKLFVAIVITFILVLPEFF). At 26 to 214 (KTPKERTLEL…KSVTCSMKIT (189 aa)) the chain is on the extracellular side. Residues Asn-45, Asn-54, Asn-76, and Asn-142 are each glycosylated (N-linked (GlcNAc...) asparagine). Residues 215 to 235 (WYVLVLFVFMLGIIFIIYKIL) form a helical membrane-spanning segment. The Cytoplasmic segment spans residues 236-286 (EEHRRVWRRQSHNYKSSSVLFRGHDSGKLSTLNVRVIPGYPWTIWTRDFDE).

It localises to the membrane. The polypeptide is Transmembrane protein 156 (Tmem156) (Rattus norvegicus (Rat)).